The sequence spans 378 residues: Glutamate 5-kinase (378 aa).

ATP is bound at residue lysine 20. 3 residues coordinate substrate: serine 60, aspartate 147, and asparagine 159. ATP contacts are provided by residues 179 to 180 (TD) and 221 to 227 (TGGMLTK). Residues 286–364 (RGRVVLDDGA…SQIARILGSM (79 aa)) enclose the PUA domain.

The protein belongs to the glutamate 5-kinase family.

The protein resides in the cytoplasm. The catalysed reaction is L-glutamate + ATP = L-glutamyl 5-phosphate + ADP. Its pathway is amino-acid biosynthesis; L-proline biosynthesis; L-glutamate 5-semialdehyde from L-glutamate: step 1/2. Catalyzes the transfer of a phosphate group to glutamate to form L-glutamate 5-phosphate. In Bordetella pertussis (strain Tohama I / ATCC BAA-589 / NCTC 13251), this protein is Glutamate 5-kinase.